Here is a 72-residue protein sequence, read N- to C-terminus: DNA-directed RNA polymerase subunit omega (72 aa).

This sequence belongs to the RNA polymerase subunit omega family. In terms of assembly, the RNAP catalytic core consists of 2 alpha, 1 beta, 1 beta' and 1 omega subunit. When a sigma factor is associated with the core the holoenzyme is formed, which can initiate transcription.

It carries out the reaction RNA(n) + a ribonucleoside 5'-triphosphate = RNA(n+1) + diphosphate. Promotes RNA polymerase assembly. Latches the N- and C-terminal regions of the beta' subunit thereby facilitating its interaction with the beta and alpha subunits. The protein is DNA-directed RNA polymerase subunit omega (rpoZ) of Clostridium tetani (strain Massachusetts / E88).